A 219-amino-acid chain; its full sequence is Uracil-DNA glycosylase (219 aa).

Catalysis depends on aspartate 61, which acts as the Proton acceptor.

The protein belongs to the uracil-DNA glycosylase (UDG) superfamily. UNG family.

The protein localises to the cytoplasm. The enzyme catalyses Hydrolyzes single-stranded DNA or mismatched double-stranded DNA and polynucleotides, releasing free uracil.. Excises uracil residues from the DNA which can arise as a result of misincorporation of dUMP residues by DNA polymerase or due to deamination of cytosine. In Exiguobacterium sibiricum (strain DSM 17290 / CCUG 55495 / CIP 109462 / JCM 13490 / 255-15), this protein is Uracil-DNA glycosylase.